A 201-amino-acid chain; its full sequence is Ras-related protein Rab-1B (201 aa).

Met1 carries the post-translational modification N-acetylmethionine. Ser17, Gly18, Val19, Gly20, Lys21, Ser22, Cys23, Tyr33, Thr34, Glu35, Ser36, Ser39, and Thr40 together coordinate GTP. Residue Ser22 coordinates Mg(2+). Residues 30-45 carry the Switch 1 motif; that stretch reads DDTYTESYISTIGVDF. Positions 40 and 63 each coordinate Mg(2+). Residues 64–83 are switch 2 region; required for interaction with REP1/CHM; sequence TAGQERGRTITSSYYRGAHG. The Switch 2 signature appears at 65–80; that stretch reads AGQERGRTITSSYYRG. GTP is bound by residues Gly66, Asn121, Lys122, Asp124, Ser151, Ala152, and Lys153. The tract at residues 173–201 is disordered; the sequence is MGPGAASGGERPNLKIDSTPVKQAGGGCC. 2 S-geranylgeranyl cysteine lipidation sites follow: Cys200 and Cys201. Cys201 is modified (cysteine methyl ester).

This sequence belongs to the small GTPase superfamily. Rab family. Interacts with MICAL1 and MICAL2. Interacts (in GTP-bound form) with MICALCL, MICAL1 and MILCAL3. Interacts with GDI1; the interaction requires the GDP-bound state. Interacts with CHM/REP1; the interaction requires the GDP-bound form and is necessary for prenylation by GGTase II. Interacts with RabGAP TBC1D20. Interacts (in GDP-bound form) with lipid phosphatase MTMR6 (via GRAM domain); the interaction regulates MTMR6 recruitment to the endoplasmic reticulum-Golgi intermediate compartment. Interacts (in GDP-bound form) with lipid phosphatase MTMR7. The cofactor is Mg(2+). In terms of processing, prenylated; by GGTase II, only after interaction of the substrate with Rab escort protein 1 (REP1).

The protein localises to the cytoplasm. It is found in the membrane. Its subcellular location is the preautophagosomal structure membrane. The protein resides in the perinuclear region. The enzyme catalyses GTP + H2O = GDP + phosphate + H(+). Its activity is regulated as follows. Regulated by guanine nucleotide exchange factors (GEFs) which promote the exchange of bound GDP for free GTP. Regulated by GTPase activating proteins (GAPs) including TBC1D20 which increases the GTP hydrolysis activity. Inhibited by GDP dissociation inhibitors (GDIs). The small GTPases Rab are key regulators of intracellular membrane trafficking, from the formation of transport vesicles to their fusion with membranes. Rabs cycle between an inactive GDP-bound form and an active GTP-bound form that is able to recruit to membranes different set of downstream effectors directly responsible for vesicle formation, movement, tethering and fusion. Plays a role in the initial events of the autophagic vacuole development which take place at specialized regions of the endoplasmic reticulum. Regulates vesicular transport between the endoplasmic reticulum and successive Golgi compartments. Required to modulate the compacted morphology of the Golgi. Promotes the recruitment of lipid phosphatase MTMR6 to the endoplasmic reticulum-Golgi intermediate compartment. The sequence is that of Ras-related protein Rab-1B (RAB1B) from Sus scrofa (Pig).